Consider the following 475-residue polypeptide: Arginine/ornithine antiporter (475 aa).

The next 12 membrane-spanning stretches (helical) occupy residues 10 to 30 (IGLL…GVFG), 42 to 62 (GPVL…ALSL), 74 to 94 (GIFS…SGWG), 101 to 121 (LGNV…FPIF), 157 to 177 (LVTI…IVLF), 205 to 225 (NCMM…MLSA), 238 to 258 (ILGL…PYGY), 283 to 303 (WGGY…WLSW), 333 to 353 (PTFA…TLLF), 361 to 381 (AYSL…AYQI), 397 to 417 (LLIG…AGVS), and 451 to 471 (WLIT…VVSG).

The protein belongs to the amino acid-polyamine-organocation (APC) superfamily. Basic amino acid/polyamine antiporter (APA) (TC 2.A.3.2) family.

It localises to the cell membrane. The catalysed reaction is L-ornithine(in) + L-arginine(out) = L-ornithine(out) + L-arginine(in). Functionally, catalyzes electroneutral exchange between L-arginine and L-ornithine. In Latilactobacillus sakei (Lactobacillus sakei), this protein is Arginine/ornithine antiporter (arcD).